A 316-amino-acid chain; its full sequence is Ribosomal RNA small subunit methyltransferase H (316 aa).

S-adenosyl-L-methionine is bound by residues 35-37, D55, F84, D105, and Q112; that span reads AGH.

It belongs to the methyltransferase superfamily. RsmH family.

The protein localises to the cytoplasm. The catalysed reaction is cytidine(1402) in 16S rRNA + S-adenosyl-L-methionine = N(4)-methylcytidine(1402) in 16S rRNA + S-adenosyl-L-homocysteine + H(+). Its function is as follows. Specifically methylates the N4 position of cytidine in position 1402 (C1402) of 16S rRNA. This is Ribosomal RNA small subunit methyltransferase H from Streptococcus thermophilus (strain ATCC BAA-250 / LMG 18311).